Reading from the N-terminus, the 1749-residue chain is Intraflagellar transport protein 172 homolog (1749 aa).

M1 bears the N-acetylmethionine mark. K4 is covalently cross-linked (Glycyl lysine isopeptide (Lys-Gly) (interchain with G-Cter in SUMO1)). 9 WD repeats span residues 14 to 53 (DGAAKVTCMAWSQNNAKFAVCTVDRVVLLYDEHGERRDKF), 64 to 103 (RKSYMVKGMAFSPDSTKIAIGQTDNIIYVYKIGEDWGDKK), 110 to 148 (IQTSAVTCLQWPAEYIIVFGLAEGKVRLANTKTNKSSTI), 150 to 191 (GTES…ESQG), 195 to 233 (NHPCPPYALAWATNSIVAAGCDRKIVAYGKEGHMLQTFD), 238 to 278 (PQER…WEEA), 284 to 323 (TNLYTITALAWKRDGSRLCVGTLCGGVEQFDCCLRRSIYK), 483 to 520 (SHESRVDWLELNETGHKLLFRDRKLRLHLYDIESCSKT), and 521 to 559 (MILNFCSYMQWVPGSDVLVAQNRNSLCVWYNIEAPERVT). A TPR 1 repeat occupies 593–624 (DEGLIEFGTAIDDGNYIRATAFLETLEMTPET). An Omega-N-methylarginine modification is found at R672. 13 TPR repeats span residues 692–725 (EKNYKLAEMIFLEQNAVEEAMGMYQELHRWDECI), 809–842 (GELYERAGDLFEKIHNPQKALECYRKGNAFMKAV), 854–887 (VKLEEAWGDHLVQQKQLDAAINHYIEARCSIKAI), 912–945 (SKYYPLVAQHYASLQEYEIAEELYTKGDRTKDAI), 947–970 (MYTQAGRWEQAHKLAMKCMRPEDV), 971–1004 (SVLYITQAQEMEKQGKYREAERLYVTVQEPDLAI), 1042–1075 (EGRLQEAEYHYLEAQEWKATVNMYRASGLWEEAY), 1142–1175 (PEVHLKYAMFLEDEGKFEEAEAEFIRAGKPKEAV), 1276–1309 (VEGFVEQARHWEQAGEYSRAVDCYLKVRDSGNSG), 1345–1378 (IGKHSAAAELYLNLDLVKEAIDAFIEGEEWNKAK), 1411–1445 (GVDVIAALDLYVEQGQWDKCIETATKQNYKILHKY), 1447–1477 (ALYATHLIREGSSAQALALYVQHGAPANPQN), and 1574–1607 (DKAFYEAGIAAKAVGWDNMAFIFLNRFLDLTDAI).

Belongs to the IFT172 family. As to quaternary structure, interacts with IFT88. Interacts with IFT57. Interacts with RABL2/RABL2A; binds preferentially to GDP-bound RABL2.

The protein resides in the cell projection. The protein localises to the cilium. Functionally, required for the maintenance and formation of cilia. Plays an indirect role in hedgehog (Hh) signaling, cilia being required for all activity of the hedgehog pathway. The sequence is that of Intraflagellar transport protein 172 homolog (IFT172) from Homo sapiens (Human).